The chain runs to 656 residues: DNA ligase (656 aa).

Residues aspartate 32–aspartate 36 and serine 81–leucine 82 each bind NAD(+). Lysine 112 acts as the N6-AMP-lysine intermediate in catalysis. Arginine 133, glutamate 167, and lysine 306 together coordinate NAD(+). Residues cysteine 400, cysteine 403, cysteine 416, and cysteine 421 each contribute to the Zn(2+) site. In terms of domain architecture, BRCT spans glutamate 577–aspartate 656.

This sequence belongs to the NAD-dependent DNA ligase family. LigA subfamily. It depends on Mg(2+) as a cofactor. The cofactor is Mn(2+).

It catalyses the reaction NAD(+) + (deoxyribonucleotide)n-3'-hydroxyl + 5'-phospho-(deoxyribonucleotide)m = (deoxyribonucleotide)n+m + AMP + beta-nicotinamide D-nucleotide.. In terms of biological role, DNA ligase that catalyzes the formation of phosphodiester linkages between 5'-phosphoryl and 3'-hydroxyl groups in double-stranded DNA using NAD as a coenzyme and as the energy source for the reaction. It is essential for DNA replication and repair of damaged DNA. In Helicobacter pylori (strain Shi470), this protein is DNA ligase.